Reading from the N-terminus, the 600-residue chain is Proline dehydrogenase 1, mitochondrial (600 aa).

The tract at residues 155–177 (AEHKEMESCTSAAERDGSGTNKR) is disordered. N6-acetyllysine is present on residues K368 and K486.

Belongs to the proline oxidase family. FAD is required as a cofactor. Expressed in lung, skeletal muscle and brain, to a lesser extent in heart and kidney, and weakly in liver, placenta and pancreas.

The protein resides in the mitochondrion matrix. The enzyme catalyses L-proline + a quinone = (S)-1-pyrroline-5-carboxylate + a quinol + H(+). Its pathway is amino-acid degradation; L-proline degradation into L-glutamate; L-glutamate from L-proline: step 1/2. Converts proline to delta-1-pyrroline-5-carboxylate. The protein is Proline dehydrogenase 1, mitochondrial of Homo sapiens (Human).